We begin with the raw amino-acid sequence, 395 residues long: Probable isocitrate dehydrogenase [NAD] gamma 2, mitochondrial (395 aa).

A mitochondrion-targeting transit peptide spans Met-1–Val-25. Residue Thr-117 participates in citrate binding. Residues Arg-133, Arg-164, and Asp-251 each coordinate substrate. Asp-251 lines the Mn(2+) pocket. ADP is bound at residue Asn-321.

This sequence belongs to the isocitrate and isopropylmalate dehydrogenases family. Heterooligomer of subunits alpha (IDH3A), beta (IDH3B), and gamma (IDH3G) in the apparent ratio of 2:1:1. The heterodimer containing one IDH3A and one IDH3B subunit and the heterodimer containing one IDH3A and one IDH3G subunit assemble into a heterotetramer (which contains two subunits of IDH3A, one of IDH3B and one of IDH3G) and further into the heterooctamer. Requires Mg(2+) as cofactor. Mn(2+) serves as cofactor.

It is found in the mitochondrion. The heterotetramer and the heterodimer composed of IDH3A and IDH3G subunits can be allosterically activated by citrate (CIT) or/and ADP, and the two activators can act independently or synergistically. The heterodimer composed of IDH3A and IDH3B subunits cannot be allosterically regulated and the allosteric regulation of the heterotetramer is through the IDH3G subunit and not the IDH3B subunit. The IDH3G subunit contains the allosteric site which consists of a CIT-binding site and an ADP-binding site, and the binding of CIT and ADP causes conformational changes at the allosteric site which are transmitted to the active site in the catalytic subunit (IDH3A) through a cascade of conformational changes at the heterodimer interface, leading to stabilization of the isocitrate-binding at the active site and thus activation of the enzyme. ATP can activate the heterotetramer and the heterodimer composed of IDH3A and IDH3G subunits at low concentrations but inhibits their activities at high concentrations, whereas ATP exhibits only inhibitory effect on the heterodimer composed of IDH3A and IDH3B subunits. Regulatory subunit which plays a role in the allosteric regulation of the enzyme catalyzing the decarboxylation of isocitrate (ICT) into alpha-ketoglutarate. The heterodimer composed of the alpha (IDH3A) and beta (IDH3B) subunits and the heterodimer composed of the alpha (IDH3A) and gamma (IDH3G) subunits, have considerable basal activity but the full activity of the heterotetramer (containing two subunits of IDH3A, one of IDH3B and one of IDH3G) requires the assembly and cooperative function of both heterodimers. In Rattus norvegicus (Rat), this protein is Probable isocitrate dehydrogenase [NAD] gamma 2, mitochondrial.